Consider the following 449-residue polypeptide: Packaging protein 1 (449 aa).

A disordered region spans residues 1–78 (METRGRRPAA…PAKRGDMLDR (78 aa)). 171–178 (GPTGCGKS) serves as a coordination point for ATP. Residues 440–449 (RAYRARKTPK) form a DNA-binding region.

Belongs to the adenoviridae packaging protein 1 family. As to quaternary structure, homodimer. Part of a genome packaging complex composed of packaging proteins 1, 2 and 3; this complex specifically binds to the packaging sequence on the left end of viral genomic DNA and performs packaging of the viral genome. Interacts with protein 33K.

It localises to the virion. Its subcellular location is the host nucleus. It is found in the host nucleoplasm. The protein localises to the host nucleolus. Component of the packaging machinery which encapsidates the viral DNA into preformed capsids and transcriptional activator of the viral major late promoter (MLP). Binds, along with packaging proteins 2 and 3, to the specific packaging sequence on the left end of viral genomic DNA and displays ATPase activity thereby providing the power stroke of the packaging machinery. The activity of packaging protein IVa2 is stimulated by protein 33K which acts as a terminase. May be the protein that pumps DNA into the capsid powered by ATP hydrolysis. Specifically binds to the 5'-CG-3' nucleotides of the repeats making up the packaging sequence. Component of the DEF-A and DEF-B transcription factors that bind downstream elements of the major late promoter (MLP), and stimulate transcription from the MLP after initiation of viral DNA replication. DEF-A is a heterodimer packaging proteins 1 and 2 and DEF-B is a homodimer of packaging protein 1. This is Packaging protein 1 from Human adenovirus C serotype 5 (HAdV-5).